We begin with the raw amino-acid sequence, 189 residues long: Leucine repeat adapter protein 25 (189 aa).

Phosphoserine is present on serine 28. The disordered stretch occupies residues 54-82 (ELSRAARAPDGPRHAAGSANSGSAAGPRR). Residues 68-79 (AAGSANSGSAAG) show a composition bias toward low complexity. Residues 86 to 114 (LDSALAALRKEMVGLRQLDMSLLCQLWGL) form an LRR repeat. A disordered region spans residues 136–175 (SSLHSDSSYPPDAGLSDDEEPPDASLPPDPPPLTVPQTHN). A compositionally biased stretch (pro residues) spans 159–169 (ASLPPDPPPLT). Serine 188 carries the post-translational modification Phosphoserine.

Belongs to the FAM89 family. As to quaternary structure, interacts with SKI. Interacts (via LRR repeat) with CDC42BPA (via AGC-kinase C-terminal domain), CDC42BPB (via AGC-kinase C-terminal domain) and LIMK1 (via LIM zinc-binding domains). Forms a tripartite complex with CDC42BPA, CDC42BPB and LIMK1. (Microbial infection) Interacts with mouse mammary tumor virus (MMTV) envelope glycoprotein gp70. In terms of tissue distribution, widely expressed. Expressed in the early postnatal brain.

Its subcellular location is the cytoplasm. The protein resides in the cell projection. It is found in the lamellipodium. The protein localises to the cell surface. Functionally, negatively regulates TGF-beta-induced signaling; in cooperation with SKI prevents the translocation of SMAD2 from the nucleus to the cytoplasm in response to TGF-beta. Acts as an adapter that mediates the specific recognition of LIMK1 by CDC42BPA and CDC42BPB in the lamellipodia. LRAP25-mediated CDC42BPA/CDC42BPB targeting to LIMK1 and the lamellipodium results in LIMK1 activation and the subsequent phosphorylation of CFL1 which is important for lamellipodial F-actin regulation. In terms of biological role, (Microbial infection) May be a receptor for mouse mammary tumor virus (MMTV). This Mus musculus (Mouse) protein is Leucine repeat adapter protein 25.